The following is a 266-amino-acid chain: Imidazole glycerol phosphate synthase subunit HisF (266 aa).

Residues aspartate 11 and aspartate 130 contribute to the active site. The disordered stretch occupies residues 134-157; that stretch reads RTPEEAARPGPDGAPRGEGWDVYS.

Belongs to the HisA/HisF family. Heterodimer of HisH and HisF.

The protein localises to the cytoplasm. It carries out the reaction 5-[(5-phospho-1-deoxy-D-ribulos-1-ylimino)methylamino]-1-(5-phospho-beta-D-ribosyl)imidazole-4-carboxamide + L-glutamine = D-erythro-1-(imidazol-4-yl)glycerol 3-phosphate + 5-amino-1-(5-phospho-beta-D-ribosyl)imidazole-4-carboxamide + L-glutamate + H(+). It functions in the pathway amino-acid biosynthesis; L-histidine biosynthesis; L-histidine from 5-phospho-alpha-D-ribose 1-diphosphate: step 5/9. Functionally, IGPS catalyzes the conversion of PRFAR and glutamine to IGP, AICAR and glutamate. The HisF subunit catalyzes the cyclization activity that produces IGP and AICAR from PRFAR using the ammonia provided by the HisH subunit. In Paracidovorax citrulli (strain AAC00-1) (Acidovorax citrulli), this protein is Imidazole glycerol phosphate synthase subunit HisF.